The primary structure comprises 1187 residues: Serine/threonine-protein kinase SIK3 homolog (1187 aa).

The span at 1 to 15 (MAAVSSGAAAAAGIP) shows a compositional bias: low complexity. The tract at residues 1–41 (MAAVSSGAAAAAGIPNPNPNRERPQQQQQQQPASAALHPVA) is disordered. The 252-residue stretch at 59-310 (YEMERTIGKG…MEQICKNKWM (252 aa)) folds into the Protein kinase domain. ATP contacts are provided by residues 65–73 (IGKGNFAVV) and Lys-88. The active-site Proton acceptor is Asp-181. Thr-214 carries the phosphothreonine modification. Position 218 is a phosphoserine (Ser-218). A UBA domain is found at 337–377 (LINEQVLMAMAEMGFDRERTLQSLHADSYDHYSATYSLLSD). 3 disordered regions span residues 548 to 587 (LKRPRGQSPLVTSPHPIPAVAPVDEEGSDAEPDPEAVQRS), 697 to 776 (IQPS…PPGS), and 1060 to 1092 (CADAADAGMESDHNGYGSRSTQSDSYRPRGALQ). Acidic residues predominate over residues 570–581 (VDEEGSDAEPDP). Positions 739-749 (VQYQHGSALYQ) are enriched in polar residues.

It belongs to the protein kinase superfamily. CAMK Ser/Thr protein kinase family. SNF1 subfamily. Mg(2+) serves as cofactor.

The enzyme catalyses L-seryl-[protein] + ATP = O-phospho-L-seryl-[protein] + ADP + H(+). It carries out the reaction L-threonyl-[protein] + ATP = O-phospho-L-threonyl-[protein] + ADP + H(+). The polypeptide is Serine/threonine-protein kinase SIK3 homolog (Danio rerio (Zebrafish)).